Consider the following 482-residue polypeptide: 23S rRNA (uracil(1939)-C(5))-methyltransferase RlmD (482 aa).

Residues 1–33 (MANLFKQSRAKQKNKTTPSQTQTSTKGSARANA) are disordered. The segment covering 15–28 (KTTPSQTQTSTKGS) has biased composition (low complexity). The 58-residue stretch at 51-108 (TAQDANNNAITIQELDWMGQGVARGATMYFVEGALPGETCDIEVVSSKKKVVSAKTIS) folds into the TRAM domain. Positions 121, 127, 130, and 208 each coordinate [4Fe-4S] cluster. S-adenosyl-L-methionine-binding residues include Gln313, Phe342, Asn347, Glu363, Asp390, and Asp411. The active-site Nucleophile is Cys437.

It belongs to the class I-like SAM-binding methyltransferase superfamily. RNA M5U methyltransferase family. RlmD subfamily.

The enzyme catalyses uridine(1939) in 23S rRNA + S-adenosyl-L-methionine = 5-methyluridine(1939) in 23S rRNA + S-adenosyl-L-homocysteine + H(+). Functionally, catalyzes the formation of 5-methyl-uridine at position 1939 (m5U1939) in 23S rRNA. The chain is 23S rRNA (uracil(1939)-C(5))-methyltransferase RlmD from Alteromonas mediterranea (strain DSM 17117 / CIP 110805 / LMG 28347 / Deep ecotype).